Consider the following 782-residue polypeptide: General transcription and DNA repair factor IIH helicase/translocase subunit XPB (782 aa).

Positions 1–11 are enriched in basic and acidic residues; sequence MGRKDKSDREK. Disordered regions lie at residues 1–47 and 211–242; these read MGRK…VDES and TISS…SGTQ. A Nuclear localization signal motif is present at residues 6-17; sequence KSDREKKSKKRY. Over residues 19 to 28 the composition is skewed to acidic residues; that stretch reads EDEEEDEEVI. A compositionally biased stretch (low complexity) spans 211–223; the sequence is TISSKSAISKSQQ. Over residues 224–242 the composition is skewed to polar residues; it reads DNGGPSSSQPADGQRSGTQ. The Helicase ATP-binding domain maps to 326 to 487; it reads MFGNGRARSG…DLNFLIGPKL (162 aa). 339-346 contacts ATP; it reads LPCGAGKS. Residues 440–443 carry the DEVH box motif; the sequence is DEVH. Positions 541–701 constitute a Helicase C-terminal domain; sequence RACQFLIRFH…LAGMEEEDLM (161 aa).

Belongs to the helicase family. RAD25/XPB subfamily. As to quaternary structure, component of the 7-subunit TFIIH core complex composed of XPB/ERCC3, XPD/ERCC2, GTF2H1, GTF2H2, GTF2H3, GTF2H4 and GTF2H5, which is active in NER. The core complex associates with the 3-subunit CDK-activating kinase (CAK) module composed of CCNH/cyclin H, CDK7 and MNAT1 to form the 10-subunit holoenzyme (holo-TFIIH) active in transcription. Interacts with PUF60. Interacts with ATF7IP. Interacts with Epstein-Barr virus EBNA2.

The protein resides in the nucleus. It carries out the reaction Couples ATP hydrolysis with the unwinding of duplex DNA by translocating in the 3'-5' direction.. The enzyme catalyses ATP + H2O = ADP + phosphate + H(+). Functionally, ATP-dependent 3'-5' DNA helicase/translocase; binds dsDNA rather than ssDNA, unzipping it in a translocase rather than classical helicase activity. Component of the general transcription and DNA repair factor IIH (TFIIH) core complex. When complexed to CDK-activating kinase (CAK), involved in RNA transcription by RNA polymerase II. The ATPase activity of XPB/ERCC3, but not its helicase activity, is required for DNA opening; it may wrap around the damaged DNA wedging it open, causing localized melting and twisting that allows XPD/ERCC2 helicase to anchor. The ATP-dependent helicase activity of XPB/ERCC3 may be required for promoter escape. Also involved in transcription-coupled nucleotide excision repair (NER) of damaged DNA. In NER, TFIIH acts by opening DNA around the lesion to allow the excision of the damaged oligonucleotide and its replacement by a new DNA fragment. This Danio rerio (Zebrafish) protein is General transcription and DNA repair factor IIH helicase/translocase subunit XPB (ercc3).